Consider the following 319-residue polypeptide: Multivesicular body subunit 12B (319 aa).

Positions 1-50 (MRSCFCVRRSRDPPPPQPPPPPPQRGTDQSTMPEVKDLSEALPETSMDPI) are disordered. Positions 13–24 (PPPPQPPPPPPQ) are enriched in pro residues. Phosphoserine occurs at positions 46 and 101. The region spanning 47–193 (MDPITGVGVV…SMGIWYRMGR (147 aa)) is the MABP domain. Thr122, Thr204, and Thr205 each carry phosphothreonine. A disordered region spans residues 195-222 (PRNHDSSQPTTPSQSSAASTPAPNLPRH). Residues 200 to 216 (SSQPTTPSQSSAASTPA) are compositionally biased toward low complexity. Phosphoserine is present on Ser224. The region spanning 254–303 (MDGVPFMISEKFSCVPESMQPFDLLGITIKSLAEIEKEYEYSFRTEQSAA) is the UMA domain. Positions 299-319 (EQSAAARLPPSPTRCQQIPQS) are disordered. Ser309 is modified (phosphoserine).

It belongs to the MVB12 family. Component of the ESCRT-I complex (endosomal sorting complex required for transport I) which consists of TSG101, VPS28, a VPS37 protein (VPS37A to -D) and MVB12A or MVB12B in a 1:1:1:1 stoichiometry. Interacts with TSG101; the association appears to be mediated by the TSG101-VPS37 binary subcomplex. Interacts with VPS28. Interacts with VPS37B; the association appears to be mediated by the TSG101-VPS37 binary subcomplex. Interacts with VPS37C; the association appears to be mediated by the TSG101-VPS37 binary subcomplex.

It localises to the endosome. It is found in the late endosome membrane. In terms of biological role, component of the ESCRT-I complex, a regulator of vesicular trafficking process. Required for the sorting of endocytic ubiquitinated cargos into multivesicular bodies. In Homo sapiens (Human), this protein is Multivesicular body subunit 12B (MVB12B).